We begin with the raw amino-acid sequence, 169 residues long: uncharacterized protein (169 aa).

Asparagine 13, asparagine 29, asparagine 39, and asparagine 48 each carry an N-linked (GlcNAc...) asparagine; by host glycan. The Cell attachment site motif lies at 109–111; that stretch reads RGD. An N-linked (GlcNAc...) asparagine; by host glycan is attached at asparagine 135. Residues 145 to 165 form a helical membrane-spanning segment; that stretch reads IYHMAIVYILIMYQIYILSLI.

It localises to the membrane. This is an uncharacterized protein from Acanthamoeba polyphaga (Amoeba).